Consider the following 500-residue polypeptide: Probable cytosol aminopeptidase (500 aa).

2 residues coordinate Mn(2+): lysine 264 and aspartate 269. Lysine 276 is an active-site residue. Aspartate 287, aspartate 346, and glutamate 348 together coordinate Mn(2+). Arginine 350 is an active-site residue.

Belongs to the peptidase M17 family. Mn(2+) is required as a cofactor.

The protein localises to the cytoplasm. It catalyses the reaction Release of an N-terminal amino acid, Xaa-|-Yaa-, in which Xaa is preferably Leu, but may be other amino acids including Pro although not Arg or Lys, and Yaa may be Pro. Amino acid amides and methyl esters are also readily hydrolyzed, but rates on arylamides are exceedingly low.. The enzyme catalyses Release of an N-terminal amino acid, preferentially leucine, but not glutamic or aspartic acids.. Its function is as follows. Presumably involved in the processing and regular turnover of intracellular proteins. Catalyzes the removal of unsubstituted N-terminal amino acids from various peptides. This chain is Probable cytosol aminopeptidase, found in Rhodopseudomonas palustris (strain BisB5).